A 242-amino-acid polypeptide reads, in one-letter code: Large ribosomal subunit protein uL30x (242 aa).

This sequence belongs to the universal ribosomal protein uL30 family.

This Arabidopsis thaliana (Mouse-ear cress) protein is Large ribosomal subunit protein uL30x (RPL7C).